The chain runs to 310 residues: Coproporphyrin III ferrochelatase (310 aa).

Positions 184 and 265 each coordinate Fe(2+).

The protein belongs to the ferrochelatase family.

The protein resides in the cytoplasm. It catalyses the reaction Fe-coproporphyrin III + 2 H(+) = coproporphyrin III + Fe(2+). It functions in the pathway porphyrin-containing compound metabolism; protoheme biosynthesis. Involved in coproporphyrin-dependent heme b biosynthesis. Catalyzes the insertion of ferrous iron into coproporphyrin III to form Fe-coproporphyrin III. This Limosilactobacillus reuteri (strain DSM 20016) (Lactobacillus reuteri) protein is Coproporphyrin III ferrochelatase.